The chain runs to 123 residues: Large ribosomal subunit protein uL29 (123 aa).

The residue at position 19 (lysine 19) is an N6-acetyllysine. Residue lysine 25 forms a Glycyl lysine isopeptide (Lys-Gly) (interchain with G-Cter in SUMO2) linkage. Residue serine 29 is modified to Phosphoserine. Residue lysine 43 is modified to N6-acetyllysine. The segment at 95–114 (LNKHEENLKTKKQQRKERLY) is disordered.

It belongs to the universal ribosomal protein uL29 family. Component of the large ribosomal subunit.

It is found in the cytoplasm. Functionally, component of the large ribosomal subunit. The ribosome is a large ribonucleoprotein complex responsible for the synthesis of proteins in the cell. This is Large ribosomal subunit protein uL29 (RPL35) from Bos taurus (Bovine).